We begin with the raw amino-acid sequence, 130 residues long: Small ribosomal subunit protein uS11 (130 aa).

The protein belongs to the universal ribosomal protein uS11 family. Part of the 30S ribosomal subunit. Interacts with proteins S7 and S18. Binds to IF-3.

Located on the platform of the 30S subunit, it bridges several disparate RNA helices of the 16S rRNA. Forms part of the Shine-Dalgarno cleft in the 70S ribosome. The sequence is that of Small ribosomal subunit protein uS11 from Shewanella denitrificans (strain OS217 / ATCC BAA-1090 / DSM 15013).